The sequence spans 508 residues: Fibroblast growth factor receptor substrate 2 (508 aa).

Glycine 2 carries N-myristoyl glycine lipidation. Residues 13–115 (VPDNHRNKFK…QNNSINVVEE (103 aa)) form the IRS-type PTB domain. Residues 122 to 131 (NHQTELEVPR) are compositionally biased toward basic and acidic residues. The disordered stretch occupies residues 122 to 180 (NHQTELEVPRTPRTPTTPGFAAQNLPNGYPRYPSFGDASSHPSSRHPSVGSARLPSVGE). Serine 177 carries the post-translational modification Phosphoserine. Tyrosine 196 is modified (phosphotyrosine; by FGFR1). Disordered stretches follow at residues 200 to 243 (TGVQ…PQIL) and 270 to 297 (QLGR…ERRD). Phosphoserine occurs at positions 211 and 221. Over residues 227–240 (TPKEEPSSIEDRDP) the composition is skewed to basic and acidic residues. Residues 276–286 (VSGSGANNTEW) show a composition bias toward polar residues. Tyrosine 306 bears the Phosphotyrosine; by FGFR1 mark. A disordered region spans residues 315–338 (PSASGVRRGRLTSTSTSDTQNINN). Positions 325–338 (LTSTSTSDTQNINN) are enriched in polar residues. Residue tyrosine 349 is modified to Phosphotyrosine; by FGFR1. Serine 365 carries the post-translational modification Phosphoserine. Residues 366–385 (RDEDDNLGPKTPSLNGYHNN) are disordered. Phosphotyrosine; by FGFR1 is present on residues tyrosine 392 and tyrosine 436. The disordered stretch occupies residues 441–467 (LEGGSDSDNPQTPKTPTTPLPQTPTRR). Tyrosine 471 is subject to Phosphotyrosine; by FGFR1. Residues 483-508 (SNLQKALPRDDGTSRKTRHNSTDLPM) form a disordered region.

In terms of assembly, part of a complex containing FRS2, GRB2, GAB1, PIK3R1 and SOS1. Part of a complex containing GRB2 and CBL. Identified in a complex containing FGFR4, NCAM1, CDH2, PLCG1, FRS2, SRC, SHC1, GAP43 and CTTN. Binds RET. Binds ALK, FGFR1, CKS2, MAPK1/ERK2, MAPK3/ERK1 and SRC. The tyrosine-phosphorylated protein binds the SH2 domains of GRB2 and PTPN11. Interacts with NTRK1, NTRK2 and NTRK3 (phosphorylated upon ligand-binding). Post-translationally, phosphorylated by ULK2 in vitro. Phosphorylated on tyrosine residues upon stimulation by NGF or FGF2. Phosphorylated on tyrosine residues by activated ALK and FGFR1. Phosphorylated on tyrosine residues upon activation of FGFR2 and FGFR3. Phosphorylated on threonine residues by MAP kinases; this inhibits tyrosine phosphorylation, and thereby down-regulates FRS2-mediated activation of MAP kinases. In terms of processing, ubiquitinated when tyrosine phosphorylated and in a complex with GRB2. The unphosphorylated form is not subject to ubiquitination. In terms of tissue distribution, highly expressed in heart, brain, spleen, lung, liver, skeletal muscle, kidney and testis.

It is found in the endomembrane system. In terms of biological role, adapter protein that links activated FGR and NGF receptors to downstream signaling pathways. Plays an important role in the activation of MAP kinases and in the phosphorylation of PIK3R1, the regulatory subunit of phosphatidylinositol 3-kinase, in response to ligand-mediated activation of FGFR1. Modulates signaling via SHC1 by competing for a common binding site on NTRK1. This is Fibroblast growth factor receptor substrate 2 (FRS2) from Homo sapiens (Human).